The following is a 240-amino-acid chain: MQDPNEDTEWNDVLRAKGIIGPKAKEAEITEDQIQKLMDDAIQRRTDLPLNEGQRDKKIDDMSLDELDELEDSEDEAVLEQYRQRRIAEMRATAEKARFGSVREISGQDYVNEVTKAGEGIWVVLHLYANGVPLCALIHHHMQQLAVRFPQTKFVRSVATTCIPNFPEKNLPTIFIYHEGALRKQYIGPLELRGDKLTAEELEFMLGQAGAVPTEITEDPRPQIRDKMLADLEDKSSDFY.

Residues 54 to 214 enclose the Phosducin domain; the sequence is QRDKKIDDMS…MLGQAGAVPT (161 aa). 2 positions are modified to phosphoserine: Ser-63 and Ser-73. The thioredoxin fold stretch occupies residues 99 to 240; that stretch reads FGSVREISGQ…DLEDKSSDFY (142 aa).

Belongs to the phosducin family.

The protein localises to the cytoplasm. Its function is as follows. Modulates the activation of caspases during apoptosis. The sequence is that of Phosducin-like protein 2 from Drosophila melanogaster (Fruit fly).